A 568-amino-acid polypeptide reads, in one-letter code: Methionine--tRNA ligase (568 aa).

The 'HIGH' region signature appears at 10–20; sequence PYVQSVPHLGN. Zn(2+)-binding residues include cysteine 143, cysteine 146, cysteine 156, and cysteine 159. Positions 333–337 match the 'KMSKS' region motif; it reads KFSKS. Lysine 336 serves as a coordination point for ATP.

It belongs to the class-I aminoacyl-tRNA synthetase family. MetG type 1 subfamily. Zn(2+) is required as a cofactor.

It is found in the cytoplasm. It carries out the reaction tRNA(Met) + L-methionine + ATP = L-methionyl-tRNA(Met) + AMP + diphosphate. Functionally, is required not only for elongation of protein synthesis but also for the initiation of all mRNA translation through initiator tRNA(fMet) aminoacylation. This Metallosphaera sedula (strain ATCC 51363 / DSM 5348 / JCM 9185 / NBRC 15509 / TH2) protein is Methionine--tRNA ligase.